Here is an 84-residue protein sequence, read N- to C-terminus: UPF0248 protein PF1300 (84 aa).

Belongs to the UPF0248 family.

The sequence is that of UPF0248 protein PF1300 from Pyrococcus furiosus (strain ATCC 43587 / DSM 3638 / JCM 8422 / Vc1).